A 487-amino-acid chain; its full sequence is Glutamyl-tRNA(Gln) amidotransferase subunit A (487 aa).

Active-site charge relay system residues include K79 and S158. Residue S182 is the Acyl-ester intermediate of the active site.

This sequence belongs to the amidase family. GatA subfamily. In terms of assembly, heterotrimer of A, B and C subunits.

It carries out the reaction L-glutamyl-tRNA(Gln) + L-glutamine + ATP + H2O = L-glutaminyl-tRNA(Gln) + L-glutamate + ADP + phosphate + H(+). Functionally, allows the formation of correctly charged Gln-tRNA(Gln) through the transamidation of misacylated Glu-tRNA(Gln) in organisms which lack glutaminyl-tRNA synthetase. The reaction takes place in the presence of glutamine and ATP through an activated gamma-phospho-Glu-tRNA(Gln). The protein is Glutamyl-tRNA(Gln) amidotransferase subunit A of Ehrlichia ruminantium (strain Gardel).